The following is a 368-amino-acid chain: Aminomethyltransferase (368 aa).

This sequence belongs to the GcvT family. As to quaternary structure, the glycine cleavage system is composed of four proteins: P, T, L and H.

It carries out the reaction N(6)-[(R)-S(8)-aminomethyldihydrolipoyl]-L-lysyl-[protein] + (6S)-5,6,7,8-tetrahydrofolate = N(6)-[(R)-dihydrolipoyl]-L-lysyl-[protein] + (6R)-5,10-methylene-5,6,7,8-tetrahydrofolate + NH4(+). The glycine cleavage system catalyzes the degradation of glycine. The polypeptide is Aminomethyltransferase (Alkaliphilus oremlandii (strain OhILAs) (Clostridium oremlandii (strain OhILAs))).